Here is a 208-residue protein sequence, read N- to C-terminus: Holliday junction resolvase RecU (208 aa).

Positions 86, 88, 101, and 120 each coordinate Mg(2+).

It belongs to the RecU family. Mg(2+) is required as a cofactor.

It localises to the cytoplasm. The enzyme catalyses Endonucleolytic cleavage at a junction such as a reciprocal single-stranded crossover between two homologous DNA duplexes (Holliday junction).. Its function is as follows. Endonuclease that resolves Holliday junction intermediates in genetic recombination. Cleaves mobile four-strand junctions by introducing symmetrical nicks in paired strands. Promotes annealing of linear ssDNA with homologous dsDNA. Required for DNA repair, homologous recombination and chromosome segregation. The sequence is that of Holliday junction resolvase RecU from Lacticaseibacillus casei (strain BL23) (Lactobacillus casei).